The following is an 81-amino-acid chain: Cytotoxin 3b (81 aa).

A signal peptide spans 1–21 (MKTLLLTLVVVTIVCLDLGYT). Cystine bridges form between cysteine 24–cysteine 42, cysteine 35–cysteine 59, cysteine 63–cysteine 74, and cysteine 75–cysteine 80.

It belongs to the three-finger toxin family. Short-chain subfamily. Type IA cytotoxin sub-subfamily. Monomer in solution; Homodimer and oligomer in the presence of negatively charged lipids forming a pore with a size ranging between 20 and 30 Angstroms. In terms of tissue distribution, expressed by the venom gland.

The protein localises to the secreted. The protein resides in the target cell membrane. Shows cytolytic activity on many different cells by forming pore in lipid membranes. In vivo, increases heart rate or kills the animal by cardiac arrest. In addition, it binds to heparin with high affinity, interacts with Kv channel-interacting protein 1 (KCNIP1) in a calcium-independent manner, and binds to integrin alpha-V/beta-3 (ITGAV/ITGB3) with moderate affinity. This is Cytotoxin 3b from Naja atra (Chinese cobra).